A 346-amino-acid chain; its full sequence is MNFLRSTAATLLDKYTPVSHTSTFRNTGQITPEEFVAAGDYLTFKFPSWSWADADSPSKRLPFLPPGKQFLVTRHVPCHRRLNDDFAGDAGHEEALVEGNKGGADDDGWLRTGSMTSSQPLRVREVRTVDDAGNVGDREVVDEDDIPDMEDDDDDEAIIRAEGDNSNSGKRTYTLYITYANAYKCPRMYMSGYLSNGQPLPPHLMMEDIVGDYKDKTVTLEDFPFFSHSVKMASVHPCRHASVMKTLLDRADAALKLRREKMKAGQGSGSEQGMEGLVDEINKLDVSGAHANAVEAAPGEDAEWEEVPHDVADQEVAIRVDQYLVVFLKFIASVTPGIEHDFTMGV.

The tract at residues Asp85 to Ala161 is flexible region. The Glycyl thioester intermediate role is filled by Cys238. A handle region region spans residues Ser242–Gln322.

This sequence belongs to the ATG3 family. Monomer. Interacts with apg-6/atg8 through an intermediate thioester bond through the C-terminal Gly of apg-6/atg8. Also interacts with the 40 amino acid C-terminal region of the E1-like apg-5/atg7 enzyme. Also interacts with the atg12-apg-4/atg5 conjugate.

It localises to the cytoplasm. Functionally, E2 conjugating enzyme required for the cytoplasm to vacuole transport (Cvt) and autophagy. Required for selective autophagic degradation of the nucleus (nucleophagy) as well as for mitophagy which contributes to regulate mitochondrial quantity and quality by eliminating the mitochondria to a basal level to fulfill cellular energy requirements and preventing excess ROS production. Responsible for the E2-like covalent binding of phosphatidylethanolamine to the C-terminal Gly of apg-6/atg8. The atg12-apg-4/atg5 conjugate plays a role of an E3 and promotes the transfer of apg-6/atg8 from apg-3/atg3 to phosphatidylethanolamine (PE). This step is required for the membrane association of apg-6/atg8. The formation of the apg-6/atg8-phosphatidylethanolamine conjugate is essential for autophagy and for the cytoplasm to vacuole transport (Cvt). The apg-6/atg8-PE conjugate mediates tethering between adjacent membranes and stimulates membrane hemifusion, leading to expansion of the autophagosomal membrane during autophagy. This chain is Autophagy-related protein 3 (apg-3), found in Neurospora crassa (strain ATCC 24698 / 74-OR23-1A / CBS 708.71 / DSM 1257 / FGSC 987).